The following is a 188-amino-acid chain: MVKIAIFASGSGSNFENIVEHVESGKLENIEVTALYTDHQNAFCIDRAKKHDIPVYINEPKQFDSKAAYEQHLVTLLNKDKVEWIILAGYMRLIGPDLLASFEGKILNIHPSLLPKYKGIDAIGQAYHSGDTITGSTVHYVDCGMDTGEIIEQRQCDIRPDDSKEQLEEKVKKLEYELYPSVIAKIVK.

Position 12 to 14 (12 to 14 (GSN)) interacts with N(1)-(5-phospho-beta-D-ribosyl)glycinamide. (6R)-10-formyltetrahydrofolate-binding positions include K66, 91–94 (MRLI), and N108. H110 serves as the catalytic Proton donor.

It belongs to the GART family.

The catalysed reaction is N(1)-(5-phospho-beta-D-ribosyl)glycinamide + (6R)-10-formyltetrahydrofolate = N(2)-formyl-N(1)-(5-phospho-beta-D-ribosyl)glycinamide + (6S)-5,6,7,8-tetrahydrofolate + H(+). It functions in the pathway purine metabolism; IMP biosynthesis via de novo pathway; N(2)-formyl-N(1)-(5-phospho-D-ribosyl)glycinamide from N(1)-(5-phospho-D-ribosyl)glycinamide (10-formyl THF route): step 1/1. Catalyzes the transfer of a formyl group from 10-formyltetrahydrofolate to 5-phospho-ribosyl-glycinamide (GAR), producing 5-phospho-ribosyl-N-formylglycinamide (FGAR) and tetrahydrofolate. This chain is Phosphoribosylglycinamide formyltransferase, found in Staphylococcus aureus (strain Mu50 / ATCC 700699).